An 86-amino-acid chain; its full sequence is Acyl carrier protein (86 aa).

The Carrier domain maps to 2-82; it reads ATVFERVKKV…AVVDYLKSKG (81 aa). O-(pantetheine 4'-phosphoryl)serine is present on S37.

It belongs to the acyl carrier protein (ACP) family. In terms of processing, 4'-phosphopantetheine is transferred from CoA to a specific serine of apo-ACP by AcpS. This modification is essential for activity because fatty acids are bound in thioester linkage to the sulfhydryl of the prosthetic group.

The protein resides in the cytoplasm. Its pathway is lipid metabolism; fatty acid biosynthesis. In terms of biological role, carrier of the growing fatty acid chain in fatty acid biosynthesis. The polypeptide is Acyl carrier protein (Dehalococcoides mccartyi (strain ATCC BAA-2100 / JCM 16839 / KCTC 5957 / BAV1)).